The primary structure comprises 356 residues: Delta(7)-sterol 5(6)-desaturase (356 aa).

3 helical membrane passes run 87 to 107 (LTLY…FAGL), 134 to 154 (QANI…LAEV), and 171 to 191 (WYDY…IYWI). Positions 179 to 303 (FFIAFTDLCI…FTTLWDRLGG (125 aa)) constitute a Fatty acid hydroxylase domain. The Histidine box-1 signature appears at 192 to 196 (HRGLH). A Histidine box-2 motif is present at residues 205-209 (HKPHH). Residues 235-255 (YIFPFLFPLSKIASVAFFVFV) traverse the membrane as a helical segment. Positions 280 to 284 (HTMHH) match the Histidine box-3 motif.

Belongs to the sterol desaturase family. Fe cation serves as cofactor.

It is found in the endoplasmic reticulum membrane. The catalysed reaction is a Delta(7)-sterol + 2 Fe(II)-[cytochrome b5] + O2 + 2 H(+) = a Delta(5),Delta(7)-sterol + 2 Fe(III)-[cytochrome b5] + 2 H2O. The protein operates within steroid metabolism; ergosterol biosynthesis; ergosterol from zymosterol: step 3/5. In terms of biological role, catalyzes the introduction of a C-5 double bond in the B ring of ergosterol. May contribute to the regulation of ergosterol biosynthesis. The polypeptide is Delta(7)-sterol 5(6)-desaturase (ERG3) (Leptosphaeria maculans (Blackleg fungus)).